Reading from the N-terminus, the 576-residue chain is Arginine--tRNA ligase (576 aa).

The short motif at 122–132 is the 'HIGH' region element; it reads PNVAKEMHVGH.

This sequence belongs to the class-I aminoacyl-tRNA synthetase family. In terms of assembly, monomer.

Its subcellular location is the cytoplasm. It catalyses the reaction tRNA(Arg) + L-arginine + ATP = L-arginyl-tRNA(Arg) + AMP + diphosphate. This Sodalis glossinidius (strain morsitans) protein is Arginine--tRNA ligase.